The sequence spans 233 residues: Small ribosomal subunit protein uS2c (233 aa).

It belongs to the universal ribosomal protein uS2 family.

It localises to the plastid. Its subcellular location is the apicoplast. The sequence is that of Small ribosomal subunit protein uS2c from Toxoplasma gondii.